A 307-amino-acid chain; its full sequence is Putative flagellar export/assembly protein LafU (307 aa).

A helical transmembrane segment spans residues 32 to 54; that stretch reads AWKVAFADFTLAMMALFMTLWIV. A disordered region spans residues 87–108; sequence SPSHPPKPATVAAPEETEKKAR. One can recognise an OmpA-like domain in the interval 154–272; sequence LRVLIKDDQN…RIEIMVLTKS (119 aa).

The protein belongs to the MotB family.

Its subcellular location is the cell inner membrane. Its function is as follows. Part of the flagellar gene cluster Flag-2. However, the Flag-2 flagellar system could be inactive in strain 042 due to a frameshift in lfgC. This Escherichia coli O44:H18 (strain 042 / EAEC) protein is Putative flagellar export/assembly protein LafU.